The following is a 499-amino-acid chain: Serine/threonine-protein phosphatase 5 (499 aa).

Residues 1–23 (MAMAEGERTECAEPPRDEPPADG) are disordered. A2 bears the N-acetylalanine mark. TPR repeat units lie at residues 28–61 (AEEL…NPSN), 62–95 (AIYY…DKKY), and 96–129 (IKGY…KPHD). Residues 184–499 (GKVTISFMKE…ANTLLQLGMM (316 aa)) are catalytic. Residues D242, H244, and D271 each coordinate Mn(2+). Residue H244 coordinates substrate. Substrate is bound by residues R275 and 303-304 (NH). N303 provides a ligand contact to Mn(2+). H304 (proton donor/acceptor) is an active-site residue. Mn(2+) is bound at residue H352. Residues R400 and H427 each contribute to the substrate site. H427 contributes to the Mn(2+) binding site. The segment at 495–499 (QLGMM) is required for autoinhibition.

It belongs to the PPP phosphatase family. PP-5 (PP-T) subfamily. In terms of assembly, probably forms a complex composed of chaperones HSP90 and HSP70, co-chaperones STIP1/HOP, CDC37, PPP5C, PTGES3/p23, TSC1 and client protein TSC2. Probably forms a complex composed of chaperones HSP90 and HSP70, co-chaperones CDC37, PPP5C, TSC1 and client protein TSC2, CDK4, AKT, RAF1 and NR3C1; this complex does not contain co-chaperones STIP1/HOP and PTGES3/p23. Part of a complex with HSP90/HSP90AA1 and steroid receptors. Interacts (via TPR repeats) with HSP90AA1 (via TPR repeat-binding motif) or HSPA1A/HSPA1B; the interaction is direct and activates the phosphatase activity. Dissociates from HSPA1A/HSPA1B and HSP90AA1 in response to arachidonic acid. Interacts with CPNE1 (via VWFA domain). Interacts with CDC16, CDC27. Interacts with KLHDC10 (via the 6 Kelch repeats); inhibits the phosphatase activity on MAP3K5. Interacts with ATM and ATR; both interactions are induced by DNA damage and enhance ATM and ATR kinase activity. Interacts with RAD17; reduced by DNA damage. Interacts with nuclear receptors such as NR3C1/GCR and PPARG (activated by agonist); regulates their transactivation activities. Interacts (via TPR repeats) with S100 proteins S100A1, S100A2, S100A6, S100B and S100P; the interactions are calcium-dependent, strongly activate PPP5C phosphatase activity and compete with HSP90AA1 and MAP3K5 interactions. Interacts with SMAD2 and SMAD3 but not with SMAD1; decreases SMAD3 phosphorylation and protein levels. Interacts (via TPR repeats) with CRY1 and CRY2; the interaction with CRY2 down-regulates the phosphatase activity on CSNK1E. Interacts (via TPR repeats) with the active form of RAC1, GNA12 or GNA13; these interactions activate the phosphatase activity and translocate PPP5C to the cell membrane. Interacts with FLCN. Requires Mg(2+) as cofactor. The cofactor is Mn(2+). In terms of processing, activated by at least two different proteolytic cleavages producing a 56 kDa and a 50 kDa form. Ubiquitous.

The protein localises to the nucleus. The protein resides in the cytoplasm. It localises to the cell membrane. The catalysed reaction is O-phospho-L-seryl-[protein] + H2O = L-seryl-[protein] + phosphate. It catalyses the reaction O-phospho-L-threonyl-[protein] + H2O = L-threonyl-[protein] + phosphate. With respect to regulation, autoinhibited. In the autoinhibited state, the TPR domain interacts with the catalytic region and prevents substrate access to the catalytic pocket. Allosterically activated by various polyunsaturated fatty acids, free long-chain fatty-acids and long-chain fatty acyl-CoA esters, arachidonic acid being the most effective activator. HSP90A and probably RAC1, GNA12 and GNA13 can also release the autoinhibition by the TPR repeat. Activation by RAC1, GNA12 and GNA13 is synergistic with the one produced by fatty acids binding. Inhibited by okadaic acid. Serine/threonine-protein phosphatase that dephosphorylates a myriad of proteins involved in different signaling pathways including the kinases CSNK1E, ASK1/MAP3K5, PRKDC and RAF1, the nuclear receptors NR3C1, PPARG, ESR1 and ESR2, SMAD proteins and TAU/MAPT. Implicated in wide ranging cellular processes, including apoptosis, differentiation, DNA damage response, cell survival, regulation of ion channels or circadian rhythms, in response to steroid and thyroid hormones, calcium, fatty acids, TGF-beta as well as oxidative and genotoxic stresses. Participates in the control of DNA damage response mechanisms such as checkpoint activation and DNA damage repair through, for instance, the regulation ATM/ATR-signaling and dephosphorylation of PRKDC and TP53BP1. Inhibits ASK1/MAP3K5-mediated apoptosis induced by oxidative stress. Plays a positive role in adipogenesis, mainly through the dephosphorylation and activation of PPARG transactivation function. Also dephosphorylates and inhibits the anti-adipogenic effect of NR3C1. Regulates the circadian rhythms, through the dephosphorylation and activation of CSNK1E. May modulate TGF-beta signaling pathway by the regulation of SMAD3 phosphorylation and protein expression levels. Dephosphorylates and may play a role in the regulation of TAU/MAPT. Through their dephosphorylation, may play a role in the regulation of ions channels such as KCNH2. Dephosphorylate FNIP1, disrupting interaction with HSP90AA1/Hsp90. This chain is Serine/threonine-protein phosphatase 5 (PPP5C), found in Homo sapiens (Human).